A 245-amino-acid chain; its full sequence is Biosynthetic peptidoglycan transglycosylase (245 aa).

Residues Val20–Ala42 traverse the membrane as a helical segment.

It belongs to the glycosyltransferase 51 family.

It localises to the cell inner membrane. It carries out the reaction [GlcNAc-(1-&gt;4)-Mur2Ac(oyl-L-Ala-gamma-D-Glu-L-Lys-D-Ala-D-Ala)](n)-di-trans,octa-cis-undecaprenyl diphosphate + beta-D-GlcNAc-(1-&gt;4)-Mur2Ac(oyl-L-Ala-gamma-D-Glu-L-Lys-D-Ala-D-Ala)-di-trans,octa-cis-undecaprenyl diphosphate = [GlcNAc-(1-&gt;4)-Mur2Ac(oyl-L-Ala-gamma-D-Glu-L-Lys-D-Ala-D-Ala)](n+1)-di-trans,octa-cis-undecaprenyl diphosphate + di-trans,octa-cis-undecaprenyl diphosphate + H(+). It participates in cell wall biogenesis; peptidoglycan biosynthesis. In terms of biological role, peptidoglycan polymerase that catalyzes glycan chain elongation from lipid-linked precursors. The polypeptide is Biosynthetic peptidoglycan transglycosylase (Burkholderia ambifaria (strain ATCC BAA-244 / DSM 16087 / CCUG 44356 / LMG 19182 / AMMD) (Burkholderia cepacia (strain AMMD))).